Reading from the N-terminus, the 130-residue chain is Small ribosomal subunit protein uS11 (130 aa).

The protein belongs to the universal ribosomal protein uS11 family. In terms of assembly, part of the 30S ribosomal subunit. Interacts with proteins S7 and S18. Binds to IF-3.

Located on the platform of the 30S subunit, it bridges several disparate RNA helices of the 16S rRNA. Forms part of the Shine-Dalgarno cleft in the 70S ribosome. This Buchnera aphidicola subsp. Cinara cedri (strain Cc) protein is Small ribosomal subunit protein uS11.